Consider the following 177-residue polypeptide: Inorganic pyrophosphatase (177 aa).

Substrate contacts are provided by lysine 31, arginine 45, and tyrosine 57. Mg(2+) contacts are provided by aspartate 67, aspartate 72, and aspartate 104. Tyrosine 142 lines the substrate pocket.

This sequence belongs to the PPase family. In terms of assembly, homohexamer. Mg(2+) is required as a cofactor.

It is found in the cytoplasm. It catalyses the reaction diphosphate + H2O = 2 phosphate + H(+). Catalyzes the hydrolysis of inorganic pyrophosphate (PPi) forming two phosphate ions. The sequence is that of Inorganic pyrophosphatase from Neisseria meningitidis serogroup B (strain ATCC BAA-335 / MC58).